Consider the following 147-residue polypeptide: uncharacterized protein (147 aa).

Residues Met-1–Ser-59 enclose the Response regulatory domain. One can recognise an HTH luxR-type domain in the interval Arg-78 to Gly-143. Residues Asn-102–Leu-121 constitute a DNA-binding region (H-T-H motif).

Post-translationally, overexpressed protein is phosphorylated in vitro by non-cognate histidine kinases BarA and UhpB.

This is an uncharacterized protein from Escherichia coli (strain K12).